The following is a 283-amino-acid chain: Diaminopimelate epimerase (283 aa).

Residues Asn-13, Gln-45, and Asn-65 each contribute to the substrate site. Cys-74 acts as the Proton donor in catalysis. Residues 75–76 (GN), Asn-156, Asn-190, and 208–209 (ER) contribute to the substrate site. Residue Cys-217 is the Proton acceptor of the active site. 218-219 (GS) is a binding site for substrate.

The protein belongs to the diaminopimelate epimerase family. In terms of assembly, homodimer.

The protein localises to the cytoplasm. The enzyme catalyses (2S,6S)-2,6-diaminopimelate = meso-2,6-diaminopimelate. Its pathway is amino-acid biosynthesis; L-lysine biosynthesis via DAP pathway; DL-2,6-diaminopimelate from LL-2,6-diaminopimelate: step 1/1. In terms of biological role, catalyzes the stereoinversion of LL-2,6-diaminopimelate (L,L-DAP) to meso-diaminopimelate (meso-DAP), a precursor of L-lysine and an essential component of the bacterial peptidoglycan. The sequence is that of Diaminopimelate epimerase from Bartonella quintana (strain Toulouse) (Rochalimaea quintana).